The chain runs to 492 residues: Protein odr-4 homolog (492 aa).

Residues Leu-251–Ser-270 form a disordered region. Residues Thr-254 to Thr-268 show a composition bias toward low complexity. The helical transmembrane segment at Met-469–Leu-489 threads the bilayer.

It belongs to the ODR-4 family.

Its subcellular location is the membrane. Its function is as follows. May play a role in the trafficking of a subset of G-protein coupled receptors. In Drosophila melanogaster (Fruit fly), this protein is Protein odr-4 homolog.